The chain runs to 373 residues: P2Y purinoceptor 1 (373 aa).

Residues 1-51 (MTEVPWSVVPNGTDAAFLAGLGSLWGNSTVASTAAVSSSFQCALTKTGFQF) are Extracellular-facing. N-linked (GlcNAc...) asparagine glycans are attached at residues Asn-11 and Asn-27. Cystine bridges form between Cys-42–Cys-296 and Cys-124–Cys-202. Lys-46 provides a ligand contact to ADP. The helical transmembrane segment at 52-74 (YYLPAVYILVFIIGFLGNSVAIW) threads the bilayer. The Cytoplasmic portion of the chain corresponds to 75-87 (MFVFHMKPWSGIS). The chain crosses the membrane as a helical span at residues 88–109 (VYMFNLALADFLYVLTLPALIF). At 110 to 125 (YYFNKTDWIFGDAMCK) the chain is on the extracellular side. Asn-113 carries an N-linked (GlcNAc...) asparagine glycan. Residues 126-147 (LQRFIFHVNLYGSILFLTCISA) traverse the membrane as a helical segment. The Cytoplasmic segment spans residues 148–166 (HRYSGVVYPLKSLGRLKKK). The chain crosses the membrane as a helical span at residues 167-188 (NAIYVSVLVWLIVVVAISPILF). Residues 189–214 (YSGTGTRKNKTVTCYDTTSNDYLRSY) lie on the Extracellular side of the membrane. N-linked (GlcNAc...) asparagine glycosylation occurs at Asn-197. 203-205 (YDT) is a binding site for ADP. The helical transmembrane segment at 215–237 (FIYSMCTTVAMFCIPLVLILGCY) threads the bilayer. At 238–260 (GLIVKALIYNDLDNSPLRRKSIY) the chain is on the cytoplasmic side. A helical transmembrane segment spans residues 261-284 (LVIIVLTVFAVSYIPFHVMKTMNL). ADP contacts are provided by residues 283 to 287 (NLRAR), 303 to 306 (YATY), and Arg-310. Over 285–303 (RARLDFQTPEMCDFNDRVY) the chain is Extracellular. A helical membrane pass occupies residues 304-325 (ATYQVTRGLASLNSCVDPILYF). Over 326–373 (LAGDTFRRRLSRATRKASRRSEANLQSKSEEMTLNILSEFKQNGDTSL) the chain is Cytoplasmic.

It belongs to the G-protein coupled receptor 1 family.

The protein localises to the cell membrane. In terms of biological role, receptor for extracellular adenine nucleotides such as ADP. In platelets, binding to ADP leads to mobilization of intracellular calcium ions via activation of phospholipase C, a change in platelet shape, and ultimately platelet aggregation. The sequence is that of P2Y purinoceptor 1 (P2ry1) from Mus musculus (Mouse).